The following is a 489-amino-acid chain: Serotonin-gated chloride channel mod-1 (489 aa).

Positions 1–20 (MKFIPEITLLLLLFVHSTQA) are cleaved as a signal peptide. Over 21 to 240 (KGKRRKCPEG…VTFTFKRRYG (220 aa)) the chain is Extracellular. N-linked (GlcNAc...) asparagine glycans are attached at residues Asn44, Asn103, and Asn144. Residues Tyr180 and Trp226 each contribute to the serotonin site. Helical transmembrane passes span 241-261 (FYII…WVSF), 274-294 (VGIS…KNLP), and 304-324 (VWML…AFVC). Over 325-458 (YISRCQNSVR…ARFHPEAVDK (134 aa)) the chain is Cytoplasmic. Positions 365–398 (GSVISHYHPTSNGNGNNNRHDTPQVTGRGSLHRN) are disordered. Positions 372-391 (HPTSNGNGNNNRHDTPQVTG) are enriched in polar residues. The chain crosses the membrane as a helical span at residues 459-479 (FSIVAFPLAFTMFNLVYWWHY).

This sequence belongs to the ligand-gated ion channel (TC 1.A.9) family. Expressed in a subset of muscles, and head and tail neurons, including RME and GABAergic ventral nerve cord neurons. Expressed in AIY, RME, RID, RIF, ASI, DD1-6, and PVN neurons.

The protein localises to the membrane. It is found in the cell membrane. In terms of biological role, functions as a 5-hydroxytryptamine (serotonin) receptor. This receptor is a ligand-gated anion-specific ion channel, selective for chloride ions. Relays a long-range endocrine signal from the body cavity neurons to modulate distal adipose triglyceride lipase atgl-1 function, via the nuclear receptor nhr-76. Together with the G-protein coupled serotonin receptor ser-1 involved in male mating behavior. May mediate an inhibitory effect of serotonin on egg laying. Involved in regulating locomotory behavior, perhaps by modulating interneuronal signaling, acting in concert with G-protein coupled serotonin receptor ser-4. In the presence of food, plays a role in initiating and extending dwelling behavior, perhaps acting in AIY, RIF and ASI neurons, in opposition to neuropeptide PDF-mediated signaling. Plays a role in aversive learning upon exposure to pathogens such as Gram-negative bacterium P.aeruginosa strain PA14; perhaps acting in interneurons in response to serotonin released by the serotonergic ADF neurons. The polypeptide is Serotonin-gated chloride channel mod-1 (Caenorhabditis elegans).